Consider the following 290-residue polypeptide: RIO-type serine/threonine-protein kinase Rio1 (290 aa).

A Protein kinase domain is found at 76-290; that stretch reads TEYIGIVNSG…PIDEAMIKQL (215 aa). ATP contacts are provided by residues 82–90 and Lys103; that span reads VNSGKEAVV. The active-site Proton acceptor is Asp214. The Mg(2+) site is built by Asn219 and Asp231. Catalysis depends on Asp231, which acts as the 4-aspartylphosphate intermediate.

It belongs to the protein kinase superfamily. RIO-type Ser/Thr kinase family.

The catalysed reaction is L-seryl-[protein] + ATP = O-phospho-L-seryl-[protein] + ADP + H(+). The enzyme catalyses L-threonyl-[protein] + ATP = O-phospho-L-threonyl-[protein] + ADP + H(+). It carries out the reaction ATP + H2O = ADP + phosphate + H(+). In terms of biological role, despite the protein kinase domain is proposed to act predominantly as an ATPase. The polypeptide is RIO-type serine/threonine-protein kinase Rio1 (rio1) (Methanocaldococcus jannaschii (strain ATCC 43067 / DSM 2661 / JAL-1 / JCM 10045 / NBRC 100440) (Methanococcus jannaschii)).